Here is a 137-residue protein sequence, read N- to C-terminus: Probable Hsp20 family chaperone (137 aa).

A sHSP domain is found at 25 to 137 (LTNNNNIMKT…PKEKHYIKLN (113 aa)).

It belongs to the small heat shock protein (HSP20) family.

Probable chaperone. The polypeptide is Probable Hsp20 family chaperone (Onion yellows phytoplasma (strain OY-M)).